Here is a 736-residue protein sequence, read N- to C-terminus: Catalase-peroxidase 2 (736 aa).

The first 23 residues, 1–23 (MIKKTLPVLILLALSGSFSTAVA), serve as a signal peptide directing secretion. The segment at residues 102 to 223 (WHGAGTYRTY…LAATQMGLIY (122 aa)) is a cross-link (tryptophyl-tyrosyl-methioninium (Trp-Tyr) (with M-249)). The active-site Proton acceptor is the histidine 103. Residues 223-249 (YVNPEGPGGKPDPLASAKDIREAFSRM) constitute a cross-link (tryptophyl-tyrosyl-methioninium (Tyr-Met) (with W-102)). Histidine 264 contacts heme b.

Belongs to the peroxidase family. Peroxidase/catalase subfamily. In terms of assembly, homodimer or homotetramer. The cofactor is heme b. In terms of processing, formation of the three residue Trp-Tyr-Met cross-link is important for the catalase, but not the peroxidase activity of the enzyme.

Its subcellular location is the periplasm. It carries out the reaction H2O2 + AH2 = A + 2 H2O. It catalyses the reaction 2 H2O2 = O2 + 2 H2O. Bifunctional enzyme with both catalase and broad-spectrum peroxidase activity. This chain is Catalase-peroxidase 2, found in Escherichia coli O157:H7.